The following is a 382-amino-acid chain: Prostaglandin D2 receptor 2 (382 aa).

Residues 1–32 lie on the Extracellular side of the membrane; sequence MANVTLKPLCPLLEEMVQLPNHSNSSLRYIDH. N-linked (GlcNAc...) asparagine glycans are attached at residues Asn3, Asn21, and Asn24. Residues 33–55 form a helical membrane-spanning segment; the sequence is VSVLLHGLASLLGLVENGLILFV. Over 56 to 66 the chain is Cytoplasmic; sequence VGCRMRQTVVT. Residues 67–88 form a helical membrane-spanning segment; that stretch reads TWVLHLALSDLLAAASLPFFTY. The Extracellular portion of the chain corresponds to 89 to 105; the sequence is FLAVGHSWELGTTFCKL. Cys103 and Cys181 are joined by a disulfide. A helical transmembrane segment spans residues 106-126; that stretch reads HSSVFFLNMFASGFLLSAISL. The Cytoplasmic portion of the chain corresponds to 127–145; the sequence is DRCLQVVRPVWAQNHRTVA. A helical transmembrane segment spans residues 146–167; it reads VAHRVCLMLWALAVLNTIPYFV. The Extracellular portion of the chain corresponds to 168–209; sequence FRDTIPRLDGRIMCYYNLLLWNPGPDRDTTCDYRQKALAVSK. Residues 210–230 form a helical membrane-spanning segment; sequence FLLAFMVPLAIIASSHVAVSL. The Cytoplasmic portion of the chain corresponds to 231 to 246; the sequence is RLHHRGRQRTGRFVRL. A helical transmembrane segment spans residues 247-268; sequence VAAIVVAFVLCWGPYHIFSLLE. Over 269 to 287 the chain is Extracellular; that stretch reads ARAHSVTTLRQLASRGLPF. The chain crosses the membrane as a helical span at residues 288 to 307; the sequence is VTSLAFFNSVVNPLLYVFTC. Topologically, residues 308-357 are cytoplasmic; that stretch reads PDMLYKLRRSLRAVLESVLVEDSDQSGGLRNRRRRASSTATPASTLLLAD. The Involved in the recycling of CRTH2 motif lies at 329-332; the sequence is DSDQ. Residues Ser330 and Ser344 each carry the phosphoserine modification.

The protein belongs to the G-protein coupled receptor 1 family. Phosphorylated.

It is found in the cell membrane. In terms of biological role, receptor for prostaglandin D2 (PGD2). Coupled to the G(i)-protein. Receptor activation may result in pertussis toxin-sensitive decreases in cAMP levels and Ca(2+) mobilization. PI3K signaling is also implicated in mediating PTGDR2 effects. PGD2 induced receptor internalization. CRTH2 internalization can be regulated by diverse kinases such as, PKC, PKA, GRK2, GPRK5/GRK5 and GRK6. Receptor activation is responsible, at least in part, in immune regulation and allergic/inflammation responses. In Mus musculus (Mouse), this protein is Prostaglandin D2 receptor 2 (Ptgdr2).